The following is a 197-amino-acid chain: Imidazoleglycerol-phosphate dehydratase (197 aa).

It belongs to the imidazoleglycerol-phosphate dehydratase family.

The protein localises to the cytoplasm. It carries out the reaction D-erythro-1-(imidazol-4-yl)glycerol 3-phosphate = 3-(imidazol-4-yl)-2-oxopropyl phosphate + H2O. It functions in the pathway amino-acid biosynthesis; L-histidine biosynthesis; L-histidine from 5-phospho-alpha-D-ribose 1-diphosphate: step 6/9. This Pseudomonas putida (strain GB-1) protein is Imidazoleglycerol-phosphate dehydratase.